The following is a 292-amino-acid chain: UTP--glucose-1-phosphate uridylyltransferase (292 aa).

This sequence belongs to the UDPGP type 2 family.

The enzyme catalyses alpha-D-glucose 1-phosphate + UTP + H(+) = UDP-alpha-D-glucose + diphosphate. In terms of biological role, may play a role in stationary phase survival. The sequence is that of UTP--glucose-1-phosphate uridylyltransferase (galU) from Mycoplasma genitalium (strain ATCC 33530 / DSM 19775 / NCTC 10195 / G37) (Mycoplasmoides genitalium).